Consider the following 357-residue polypeptide: DNA replication and repair protein RecF (357 aa).

Residue 30–37 (GANGSGKT) participates in ATP binding.

Belongs to the RecF family.

It localises to the cytoplasm. Its function is as follows. The RecF protein is involved in DNA metabolism; it is required for DNA replication and normal SOS inducibility. RecF binds preferentially to single-stranded, linear DNA. It also seems to bind ATP. The protein is DNA replication and repair protein RecF of Enterobacter sp. (strain 638).